A 31-amino-acid polypeptide reads, in one-letter code: Photosystem II reaction center protein T (31 aa).

The helical transmembrane segment at 3 to 23 (ALVYVFLLTGTLMVIFFAIFF) threads the bilayer.

This sequence belongs to the PsbT family. As to quaternary structure, PSII is composed of 1 copy each of membrane proteins PsbA, PsbB, PsbC, PsbD, PsbE, PsbF, PsbH, PsbI, PsbJ, PsbK, PsbL, PsbM, PsbT, PsbX, PsbY, PsbZ, Psb30/Ycf12, at least 3 peripheral proteins of the oxygen-evolving complex and a large number of cofactors. It forms dimeric complexes.

The protein localises to the plastid. The protein resides in the chloroplast thylakoid membrane. Functionally, found at the monomer-monomer interface of the photosystem II (PS II) dimer, plays a role in assembly and dimerization of PSII. PSII is a light-driven water plastoquinone oxidoreductase, using light energy to abstract electrons from H(2)O, generating a proton gradient subsequently used for ATP formation. This Pyropia yezoensis (Susabi-nori) protein is Photosystem II reaction center protein T.